The primary structure comprises 256 residues: tRNA pseudouridine synthase A 1 (256 aa).

Asp53 functions as the Nucleophile in the catalytic mechanism. Tyr111 provides a ligand contact to substrate.

The protein belongs to the tRNA pseudouridine synthase TruA family. In terms of assembly, homodimer.

It catalyses the reaction uridine(38/39/40) in tRNA = pseudouridine(38/39/40) in tRNA. Formation of pseudouridine at positions 38, 39 and 40 in the anticodon stem and loop of transfer RNAs. This chain is tRNA pseudouridine synthase A 1, found in Protochlamydia amoebophila (strain UWE25).